Reading from the N-terminus, the 246-residue chain is Small ribosomal subunit protein uS3 (246 aa).

A KH type-2 domain is found at 23-94 (LNEFLTRELA…RIELYAEKVA (72 aa)). The tract at residues 201 to 246 (GPKKPLPDNVSVVEPKEEKIYETPETEYKIPPPSKPLDDLSEAKVL) is disordered. 2 stretches are compositionally biased toward basic and acidic residues: residues 214–228 (EPKEEKIYETPETEY) and 236–246 (PLDDLSEAKVL). Thr223 and Thr226 each carry phosphothreonine. Ser241 bears the Phosphoserine mark.

This sequence belongs to the universal ribosomal protein uS3 family. As to quaternary structure, interacts with LTV1; the interaction is RNA-independent.

The protein localises to the cytoplasm. The protein resides in the nucleus. Its function is as follows. Has DNA repair activity directed towards the mutagenic lesions 8-oxoguanine and abasic sites in DNA. It can cleave DNA containing 8-oxoguanine residues efficiently. Also acts as an ap lyase, cleaving phosphodiester bonds via a beta,delta elimination reaction. This chain is Small ribosomal subunit protein uS3 (RpS3), found in Drosophila melanogaster (Fruit fly).